A 366-amino-acid chain; its full sequence is Chorismate synthase (366 aa).

2 residues coordinate NADP(+): Arg-48 and Arg-54. Residues 125 to 127 (RSS), 238 to 239 (NA), Gly-278, 293 to 297 (KPTSS), and Arg-319 each bind FMN.

It belongs to the chorismate synthase family. Homotetramer. The cofactor is FMNH2.

The catalysed reaction is 5-O-(1-carboxyvinyl)-3-phosphoshikimate = chorismate + phosphate. The protein operates within metabolic intermediate biosynthesis; chorismate biosynthesis; chorismate from D-erythrose 4-phosphate and phosphoenolpyruvate: step 7/7. Functionally, catalyzes the anti-1,4-elimination of the C-3 phosphate and the C-6 proR hydrogen from 5-enolpyruvylshikimate-3-phosphate (EPSP) to yield chorismate, which is the branch point compound that serves as the starting substrate for the three terminal pathways of aromatic amino acid biosynthesis. This reaction introduces a second double bond into the aromatic ring system. In Burkholderia ambifaria (strain ATCC BAA-244 / DSM 16087 / CCUG 44356 / LMG 19182 / AMMD) (Burkholderia cepacia (strain AMMD)), this protein is Chorismate synthase.